Here is a 226-residue protein sequence, read N- to C-terminus: MAVTFYDLSSEAGLEKLDEYLLSRSYISGYQASKDDLAVHAALAKPPSSKYVNVSRWYNHVEALLRISGVSAEGCGVTVEGSSVATPPVADTKASAAEDDDDDDVDLFGEETEEEKKASEERAAAVKASGKKKESGKSSVLLDVKPWDDETDMTKLEEAVRSIKMDGLLWGASKLVAVGYGIKKLQIMLTIVDDLVSVDDLVEDYLTAEPANEYIQSCDIVAFNKI.

Positions 82-131 (SSVATPPVADTKASAAEDDDDDDVDLFGEETEEEKKASEERAAAVKASGK) are disordered. Over residues 97 to 113 (AEDDDDDDVDLFGEETE) the composition is skewed to acidic residues. Basic and acidic residues predominate over residues 114-124 (EEKKASEERAA).

Belongs to the EF-1-beta/EF-1-delta family. EF-1 is composed of 4 subunits: alpha, beta (1B-alpha=beta'), delta (1B-beta), and gamma (1B-gamma).

EF-1-beta and EF-1-beta' stimulate the exchange of GDP bound to EF-1-alpha to GTP. This chain is Elongation factor 1-delta, found in Spuriopimpinella brachycarpa (Chamnamul).